Here is a 624-residue protein sequence, read N- to C-terminus: Exocyst complex component EXO70B1 (624 aa).

A disordered region spans residues 148–176 (FGLNPQGDAGAMNHRFDSEEEEDDDRDFN).

This sequence belongs to the EXO70 family. In terms of assembly, interacts with EXO70B2, SEC5A and EXO84B. Binds to PUB18. Binds directly to B1L at the plasma membrane and in small vesicles. Target of the E3 ubiquitin-protein ligase PUB18 that mediates its ubiquitination and degradation via the 26S proteasome.

It localises to the cytoplasmic vesicle. It is found in the phagosome. Its subcellular location is the endomembrane system. The protein resides in the cell membrane. The protein localises to the vesicle. Its function is as follows. Component of an exocyst subcomplex specifically involved in autophagy-related, Golgi-independent membrane traffic to the vacuole. Regulates autophagosome formation and autophagy-related Golgi-independent import into the vacuole. Positive regulator of both abscisic acid (ABA)-promoted and mannitol (drought)-promoted stomatal closure. Involved in the regulation of lateral root formation. This Arabidopsis thaliana (Mouse-ear cress) protein is Exocyst complex component EXO70B1.